Consider the following 663-residue polypeptide: Shugoshin 1 (663 aa).

2 coiled-coil regions span residues 8–29 (KQAF…RIKK) and 110–132 (DTAE…NLLE). 3 disordered regions span residues 207-250 (RNTA…MNKN), 278-401 (EHTV…LNSG), and 417-478 (FRQN…ARKN). 4 stretches are compositionally biased toward basic and acidic residues: residues 231 to 242 (RLEECNNEDKTE), 280 to 304 (TVVE…REID), 339 to 358 (KNKE…KAER), and 366 to 394 (KPWE…KEKM). Residues 427-437 (NESSLEISSSE) show a composition bias toward low complexity. The segment covering 443–453 (SLYKPYKDKSK) has biased composition (basic and acidic residues).

It belongs to the shugoshin family. As to quaternary structure, binds microtubules. Ubiquitinated by the anaphase promoting complex (APC) at the onset of anaphase, conducting to its degradation.

The protein resides in the nucleus. It is found in the chromosome. Its subcellular location is the centromere. It localises to the kinetochore. The protein localises to the nucleus speckle. Plays a central role in chromosome cohesion during mitosis by preventing premature dissociation of cohesin complex from centromeres after prophase, when most of cohesin complex dissociates from chromosomes arms. May act by preventing phosphorylation of the stag2 subunit of cohesin complex at the centromere, ensuring cohesin persistence at centromere until cohesin cleavage by espl1/separase at anaphase. May regulate kinetochore microtubule stability in mitosis, possibly to sense tension on mitotic chromosomes. The sequence is that of Shugoshin 1 from Xenopus laevis (African clawed frog).